Here is a 147-residue protein sequence, read N- to C-terminus: Lysozyme C-1 (147 aa).

An N-terminal signal peptide occupies residues 1-18 (MKALLTLVFCLLPLAAQG). Residues 19–147 (KVYSRCELAA…VSKWIRGCRL (129 aa)) form the C-type lysozyme domain. 4 cysteine pairs are disulfide-bonded: C24-C145, C48-C133, C82-C98, and C94-C112. Active-site residues include E53 and D70.

Belongs to the glycosyl hydrolase 22 family.

It is found in the secreted. The catalysed reaction is Hydrolysis of (1-&gt;4)-beta-linkages between N-acetylmuramic acid and N-acetyl-D-glucosamine residues in a peptidoglycan and between N-acetyl-D-glucosamine residues in chitodextrins.. Its function is as follows. Lysozymes have primarily a bacteriolytic function; those in tissues and body fluids are associated with the monocyte-macrophage system and enhance the activity of immunoagents. This Anas platyrhynchos (Mallard) protein is Lysozyme C-1.